We begin with the raw amino-acid sequence, 154 residues long: SsrA-binding protein (154 aa).

The interval 132–154 is disordered; the sequence is KRESIKKRQDKRDMERALKRGAE.

This sequence belongs to the SmpB family.

It localises to the cytoplasm. Required for rescue of stalled ribosomes mediated by trans-translation. Binds to transfer-messenger RNA (tmRNA), required for stable association of tmRNA with ribosomes. tmRNA and SmpB together mimic tRNA shape, replacing the anticodon stem-loop with SmpB. tmRNA is encoded by the ssrA gene; the 2 termini fold to resemble tRNA(Ala) and it encodes a 'tag peptide', a short internal open reading frame. During trans-translation Ala-aminoacylated tmRNA acts like a tRNA, entering the A-site of stalled ribosomes, displacing the stalled mRNA. The ribosome then switches to translate the ORF on the tmRNA; the nascent peptide is terminated with the 'tag peptide' encoded by the tmRNA and targeted for degradation. The ribosome is freed to recommence translation, which seems to be the essential function of trans-translation. This chain is SsrA-binding protein, found in Acaryochloris marina (strain MBIC 11017).